The chain runs to 354 residues: 3-isopropylmalate dehydrogenase (354 aa).

76–87 (GPRWDGAKERPE) is a binding site for NAD(+). Substrate-binding residues include Arg-94, Arg-104, Arg-130, and Asp-215. Residues Asp-215, Asp-239, and Asp-243 each contribute to the Mg(2+) site. 273-285 (GSAPDIAGKNKAN) lines the NAD(+) pocket.

It belongs to the isocitrate and isopropylmalate dehydrogenases family. LeuB type 1 subfamily. In terms of assembly, homodimer. The cofactor is Mg(2+). Requires Mn(2+) as cofactor.

It is found in the cytoplasm. The catalysed reaction is (2R,3S)-3-isopropylmalate + NAD(+) = 4-methyl-2-oxopentanoate + CO2 + NADH. Its pathway is amino-acid biosynthesis; L-leucine biosynthesis; L-leucine from 3-methyl-2-oxobutanoate: step 3/4. Functionally, catalyzes the oxidation of 3-carboxy-2-hydroxy-4-methylpentanoate (3-isopropylmalate) to 3-carboxy-4-methyl-2-oxopentanoate. The product decarboxylates to 4-methyl-2 oxopentanoate. This chain is 3-isopropylmalate dehydrogenase, found in Bacillus anthracis.